Here is a 374-residue protein sequence, read N- to C-terminus: Aminomethyltransferase (374 aa).

The protein belongs to the GcvT family. The glycine cleavage system is composed of four proteins: P, T, L and H.

The catalysed reaction is N(6)-[(R)-S(8)-aminomethyldihydrolipoyl]-L-lysyl-[protein] + (6S)-5,6,7,8-tetrahydrofolate = N(6)-[(R)-dihydrolipoyl]-L-lysyl-[protein] + (6R)-5,10-methylene-5,6,7,8-tetrahydrofolate + NH4(+). The glycine cleavage system catalyzes the degradation of glycine. In Edwardsiella ictaluri (strain 93-146), this protein is Aminomethyltransferase.